Reading from the N-terminus, the 396-residue chain is tRNA (guanine-N(7)-)-methyltransferase (396 aa).

S-adenosyl-L-methionine is bound by residues E125, E150, and D177. Substrate-binding residues include K203 and D233.

This sequence belongs to the class I-like SAM-binding methyltransferase superfamily. TrmB family.

The catalysed reaction is guanosine(46) in tRNA + S-adenosyl-L-methionine = N(7)-methylguanosine(46) in tRNA + S-adenosyl-L-homocysteine. The protein operates within tRNA modification; N(7)-methylguanine-tRNA biosynthesis. Its function is as follows. Catalyzes the formation of N(7)-methylguanine at position 46 (m7G46) in tRNA. This chain is tRNA (guanine-N(7)-)-methyltransferase, found in Helicobacter hepaticus (strain ATCC 51449 / 3B1).